A 784-amino-acid chain; its full sequence is ATP-dependent 6-phosphofructokinase, platelet type (784 aa).

An N-acetylmethionine modification is found at methionine 1. Residues methionine 1 to isoleucine 399 form an N-terminal catalytic PFK domain 1 region. Serine 6, serine 12, and serine 21 each carry phosphoserine. Residues glycine 34, arginine 97 to cysteine 98, and glycine 127 to serine 130 each bind ATP. Aspartate 128 contacts Mg(2+). Serine 142 bears the Phosphoserine mark. Residues serine 173–aspartate 175, arginine 210, methionine 217–arginine 219, glutamate 273, arginine 301, and histidine 307–arginine 310 contribute to the substrate site. Catalysis depends on aspartate 175, which acts as the Proton acceptor. Serine 386 carries the phosphoserine modification. Lysine 395 is subject to N6-acetyllysine. Positions lysine 400 to cysteine 411 are interdomain linker. A C-terminal regulatory PFK domain 2 region spans residues asparagine 412–valine 784. A beta-D-fructose 2,6-bisphosphate-binding site is contributed by arginine 481. At lysine 486 the chain carries N6-acetyllysine. Beta-D-fructose 2,6-bisphosphate contacts are provided by residues threonine 538–asparagine 542, arginine 576, methionine 583–glycine 585, and glutamate 639. The O-linked (GlcNAc) serine glycan is linked to serine 540. Residue tyrosine 651 is modified to Phosphotyrosine. Beta-D-fructose 2,6-bisphosphate-binding positions include arginine 665 and histidine 671 to glutamine 674. Residue lysine 688 is modified to N6-acetyllysine. Arginine 744 lines the beta-D-fructose 2,6-bisphosphate pocket. Serine 783 carries the post-translational modification Phosphoserine.

The protein belongs to the phosphofructokinase type A (PFKA) family. ATP-dependent PFK group I subfamily. Eukaryotic two domain clade 'E' sub-subfamily. As to quaternary structure, homo- and heterotetramers. Phosphofructokinase (PFK) enzyme functions as a tetramer composed of different combinations of 3 types of subunits, called PFKM (where M stands for Muscle), PFKL (Liver) and PFKP (Platelet). The composition of the PFK tetramer differs according to the tissue type it is present in. In muscles, it is composed of 4 PFKM subunits (also called M4). In the liver, the predominant form is a tetramer of PFKL subunits (L4). In erythrocytes, both PFKM and PFKL subunits randomly tetramerize to form M4, L4 and other combinations (ML3, M2L2, M3L). In platelets, brain and fibroblasts, PFK contains a higher proportion of PFKP subunits. The kinetic and regulatory properties of the tetrameric enzyme are dependent on the subunit composition, hence can vary across tissues. Interacts with ATG4B; promoting phosphorylation of ATG4B. It depends on Mg(2+) as a cofactor. Post-translationally, phosphorylation at Ser-386 promotes interaction with ATG4B. In terms of processing, glcNAcylation decreases enzyme activity.

The protein localises to the cytoplasm. The catalysed reaction is beta-D-fructose 6-phosphate + ATP = beta-D-fructose 1,6-bisphosphate + ADP + H(+). Its pathway is carbohydrate degradation; glycolysis; D-glyceraldehyde 3-phosphate and glycerone phosphate from D-glucose: step 3/4. With respect to regulation, allosterically activated by ADP, AMP, or fructose 2,6-bisphosphate, and allosterically inhibited by ATP or citrate. Functionally, catalyzes the phosphorylation of D-fructose 6-phosphate to fructose 1,6-bisphosphate by ATP, the first committing step of glycolysis. The polypeptide is ATP-dependent 6-phosphofructokinase, platelet type (PFKP) (Homo sapiens (Human)).